Reading from the N-terminus, the 197-residue chain is uncharacterized protein (197 aa).

The first 19 residues, 1–19 (MKLASLLVGSLMLAVPALA), serve as a signal peptide directing secretion.

The protein localises to the secreted. This is an uncharacterized protein from Arthroderma benhamiae (strain ATCC MYA-4681 / CBS 112371) (Trichophyton mentagrophytes).